The primary structure comprises 108 residues: Nucleoid-associated protein Bcen_6253 (108 aa).

The span at 85 to 95 (ATSQEKMSGMT) shows a compositional bias: polar residues. A disordered region spans residues 85-108 (ATSQEKMSGMTSGLPLPPGFKLPF). The span at 99 to 108 (PLPPGFKLPF) shows a compositional bias: pro residues.

This sequence belongs to the YbaB/EbfC family. Homodimer.

The protein localises to the cytoplasm. It localises to the nucleoid. Functionally, binds to DNA and alters its conformation. May be involved in regulation of gene expression, nucleoid organization and DNA protection. The protein is Nucleoid-associated protein Bcen_6253 of Burkholderia orbicola (strain AU 1054).